A 711-amino-acid polypeptide reads, in one-letter code: Polyribonucleotide nucleotidyltransferase (711 aa).

Positions 486 and 492 each coordinate Mg(2+). The KH domain maps to 553 to 612; that stretch reads PRIHTIKINPDKIKDVIGKGGSVIRALTEETGTTIEIEDDGTVKIAATDGEKAKNAIRRI. The 69-residue stretch at 622 to 690 folds into the S1 motif domain; sequence GRVYNGKVTR…RQGRIRLSIK (69 aa). Residues 689 to 711 are disordered; it reads IKEATEQSQPAAAPEAPAAEQGE. A compositionally biased stretch (low complexity) spans 694 to 711; it reads EQSQPAAAPEAPAAEQGE.

The protein belongs to the polyribonucleotide nucleotidyltransferase family. In terms of assembly, component of the RNA degradosome, which is a multiprotein complex involved in RNA processing and mRNA degradation. It depends on Mg(2+) as a cofactor.

The protein localises to the cytoplasm. The catalysed reaction is RNA(n+1) + phosphate = RNA(n) + a ribonucleoside 5'-diphosphate. Its function is as follows. Involved in mRNA degradation. Catalyzes the phosphorolysis of single-stranded polyribonucleotides processively in the 3'- to 5'-direction. This Escherichia fergusonii (strain ATCC 35469 / DSM 13698 / CCUG 18766 / IAM 14443 / JCM 21226 / LMG 7866 / NBRC 102419 / NCTC 12128 / CDC 0568-73) protein is Polyribonucleotide nucleotidyltransferase.